A 403-amino-acid chain; its full sequence is MIHTNLKRKFSCFVLVFLLFAIICVWKKGSDYEALTLQAKVFQMPKSQEKVAVGPAPQAVFSNSKQDPKEGVQILSYPRVTAKVKPQPSLQVWDKDSTYSKLNPRLLKIWRNYLNMNKYKVSYKGPGPGVKFSVEALRCHLRDHVNVSMIEATDFPFNTTEWEGYLPKENFRTKAGPWHKCAVVSSAGSLKNSQLGREIDNHDAVLRFNGAPTDNFQQDVGTKTTIRLVNSQLVTTEKRFLKDSLYTEGILILWDPSVYHADIPQWYQKPDYNFFETYKSYRRLHPSQPFYILKPQMPWELWDIIQEISPDLIQPNPPSSGMLGIIIMMTLCDQVDIYEFLPSKRKTDVCYYHQKFFDSACTMGAYHPLLFEKNMVKHLNEGTDEDIYLFGKATLSGFRNNRC.

Residues M1–K9 lie on the Cytoplasmic side of the membrane. A helical; Signal-anchor for type II membrane protein membrane pass occupies residues F10–W26. Over K27–C403 the chain is Lumenal. 3 disulfide bridges follow: C139-C403, C181-C332, and C350-C361. N146 and N158 each carry an N-linked (GlcNAc...) asparagine glycan. Substrate is bound by residues S186, N209, N230, S319–G321, C350, Y351, T362, Y366, H367, and K373. Y366 is modified (phosphotyrosine).

The protein belongs to the glycosyltransferase 29 family. As to quaternary structure, monomer and homodimer. In terms of processing, N-glycosylated.

It localises to the golgi apparatus. The protein resides in the golgi stack membrane. The protein localises to the secreted. The enzyme catalyses a beta-D-galactoside + CMP-N-acetyl-beta-neuraminate = an N-acetyl-alpha-neuraminyl-(2-&gt;6)-beta-D-galactosyl derivative + CMP + H(+). The protein operates within protein modification; protein glycosylation. Its function is as follows. Transfers sialic acid from CMP-sialic acid to galactose-containing acceptor substrates. This chain is Beta-galactoside alpha-2,6-sialyltransferase 1 (St6gal1), found in Mus musculus (Mouse).